Here is a 610-residue protein sequence, read N- to C-terminus: Menin (610 aa).

The tract at residues 214–390 is interaction with FANCD2; that stretch reads GVAERSWLYL…SLLEAGEERP (177 aa). 2 disordered regions span residues 385-404 and 460-552; these read AGEERPGEQTQGTQSQGSAL and REAE…PVLT. Residues 393–402 show a composition bias toward low complexity; it reads QTQGTQSQGS. Basic and acidic residues predominate over residues 484–500; the sequence is RRESKPEEPPPPKKPAL. Residue S487 is modified to Phosphoserine. Composition is skewed to pro residues over residues 512-521 and 537-548; these read PGPPRKPPGT and VPAPAASPPPEG. S543 carries the phosphoserine modification. T594 bears the Phosphothreonine mark.

Component of the MLL-HCF complex, at least composed of KMT2A/MLL1, MEN1, ASH2L, RBBP5, DPY30, WDR5, HCFC1 and HCFC2. Component of the menin-associated histone methyltransferase complex, at least composed of KMT2B/MLL4, MEN1, ASH2L, RBBP5, DPY30 and WDR5. Interacts with POLR2B. Interacts with POLR2A phosphorylated at 'Ser-5', but not with the unphosphorylated, nor 'Ser-2' phosphorylated POLR2A forms. Interacts with FANCD2 and DBF4. Interacts with SMAD3, but not with SMAD2, nor SMAD4. Directly interacts with NFKB1, NFKB2 and RELA. Interacts with JUND (via MBM motif); inhibits the interaction of JUND with MAPK10 and the phosphorylation of JUND by MAP kinases MAPK8 and MAPK10. Interacts with KMT2A (via MBM motif). The KMT2A-MEN1 complex interacts with PSIP1 with a greater affinity as MEN1 enhances interaction of KMT2A with PSIP1.

The protein localises to the nucleus. In terms of biological role, essential component of a MLL/SET1 histone methyltransferase (HMT) complex, a complex that specifically methylates 'Lys-4' of histone H3 (H3K4). Functions as a transcriptional regulator. Binds to the TERT promoter and represses telomerase expression. Plays a role in TGFB1-mediated inhibition of cell-proliferation, possibly regulating SMAD3 transcriptional activity. Represses JUND-mediated transcriptional activation on AP1 sites, as well as that mediated by NFKB subunit RELA. Positively regulates HOXC8 and HOXC6 gene expression. May be involved in normal hematopoiesis through the activation of HOXA9 expression. May be involved in DNA repair. The sequence is that of Menin (MEN1) from Bos taurus (Bovine).